The primary structure comprises 436 residues: MSDRQQVTNARGERIAIVSGLRTPFAKQATAFHGVSALDMGKMVVNELLSRSELDPKLVEQLVYGQVVQMPAAPNIAREIVLGTGMNVATDAYSVTRACATSFQSTVNIAESIMTGNIEIGIAGGADSSSVLPIGVSKKLAHALVDLTKARTFGQKLAIFRRLGIKDLLPVPPAVAEYSTGLSMGQTAEQMAKTHGISRADQDAMAHRSHTLAAQTWASGVMKNEVMVAHVPPYNQFIEKDNNIRESSDLASYAKLRPVFDRKHGSVTAANSTPLTDGASALLLMSEGRAKALGYTPIGYIKSYAFAAIDVWEDMLMGPSYATPMALKRAGMQLEDLTLIEMHEAFAAQALANMKMFASKKFAEEKLGQNRAIGEIDMSKFNVLGGSLAYGHPFAATGARLITQMCNELKRRGGGVGLTTACAAGGLGAAMILEVE.

Cys99 acts as the Acyl-thioester intermediate in catalysis. Residues His392 and Cys422 each act as proton acceptor in the active site.

This sequence belongs to the thiolase-like superfamily. Thiolase family. As to quaternary structure, heterotetramer of two alpha chains (FadJ) and two beta chains (FadI).

The protein localises to the cytoplasm. It catalyses the reaction an acyl-CoA + acetyl-CoA = a 3-oxoacyl-CoA + CoA. It participates in lipid metabolism; fatty acid beta-oxidation. Catalyzes the final step of fatty acid oxidation in which acetyl-CoA is released and the CoA ester of a fatty acid two carbons shorter is formed. This is 3-ketoacyl-CoA thiolase from Shewanella amazonensis (strain ATCC BAA-1098 / SB2B).